Here is a 51-residue protein sequence, read N- to C-terminus: Large ribosomal subunit protein eL39 (51 aa).

The protein belongs to the eukaryotic ribosomal protein eL39 family.

The sequence is that of Large ribosomal subunit protein eL39 (rpl39e) from Thermoplasma acidophilum (strain ATCC 25905 / DSM 1728 / JCM 9062 / NBRC 15155 / AMRC-C165).